The primary structure comprises 318 residues: Methenyltetrahydromethanopterin cyclohydrolase (318 aa).

It belongs to the MCH family.

The protein localises to the cytoplasm. It catalyses the reaction 5,10-methenyl-5,6,7,8-tetrahydromethanopterin + H2O = N(5)-formyl-5,6,7,8-tetrahydromethanopterin + H(+). Its pathway is one-carbon metabolism; methanogenesis from CO(2); 5,10-methenyl-5,6,7,8-tetrahydromethanopterin from CO(2): step 3/3. Functionally, catalyzes the reversible interconversion of 5-formyl-H(4)MPT to methenyl-H(4)MPT(+). The protein is Methenyltetrahydromethanopterin cyclohydrolase of Methanocella arvoryzae (strain DSM 22066 / NBRC 105507 / MRE50).